Consider the following 311-residue polypeptide: Tryptophan 2,3-dioxygenase (311 aa).

Residues 1 to 37 (MQPPGGDAPAGCPFSGARAAQPAQAAHEAPHVPGEAD) form a disordered region. The span at 17–27 (ARAAQPAQAAH) shows a compositional bias: low complexity. Residues 80–84 (FIIQH), Tyr142, and Arg146 each bind substrate. His269 provides a ligand contact to heme. Thr283 serves as a coordination point for substrate.

Belongs to the tryptophan 2,3-dioxygenase family. In terms of assembly, homotetramer. Heme is required as a cofactor.

It catalyses the reaction L-tryptophan + O2 = N-formyl-L-kynurenine. It functions in the pathway amino-acid degradation; L-tryptophan degradation via kynurenine pathway; L-kynurenine from L-tryptophan: step 1/2. In terms of biological role, heme-dependent dioxygenase that catalyzes the oxidative cleavage of the L-tryptophan (L-Trp) pyrrole ring and converts L-tryptophan to N-formyl-L-kynurenine. Catalyzes the oxidative cleavage of the indole moiety. This Burkholderia orbicola (strain MC0-3) protein is Tryptophan 2,3-dioxygenase.